The primary structure comprises 388 residues: Nitric oxide reductase FlRd-NAD(+) reductase (388 aa).

The protein belongs to the FAD-dependent oxidoreductase family. The cofactor is FAD.

It is found in the cytoplasm. The catalysed reaction is 2 reduced [nitric oxide reductase rubredoxin domain] + NAD(+) + H(+) = 2 oxidized [nitric oxide reductase rubredoxin domain] + NADH. It functions in the pathway nitrogen metabolism; nitric oxide reduction. In terms of biological role, one of at least two accessory proteins for anaerobic nitric oxide (NO) reductase. Reduces the rubredoxin moiety of NO reductase. This chain is Nitric oxide reductase FlRd-NAD(+) reductase, found in Aeromonas salmonicida (strain A449).